A 210-amino-acid chain; its full sequence is Transcriptional regulator DauR (210 aa).

It belongs to the DauR family.

Its function is as follows. DauR represses the dauBAR operon. The polypeptide is Transcriptional regulator DauR (Pseudomonas aeruginosa (strain ATCC 15692 / DSM 22644 / CIP 104116 / JCM 14847 / LMG 12228 / 1C / PRS 101 / PAO1)).